Reading from the N-terminus, the 293-residue chain is Protein orai (293 aa).

Residues 1–122 are Cytoplasmic-facing; that stretch reads MPRSHDPSRV…RAQLKASSRT (122 aa). The interval 62 to 81 is disordered; that stretch reads STAGGGSRNGVGSKEGSVTS. The helical transmembrane segment at 123 to 141 threads the bilayer; it reads SALLAGFAMVCLVELQYDQ. Residues 142–146 are Extracellular-facing; the sequence is STPKP. The chain crosses the membrane as a helical span at residues 147 to 167; it reads LLIVLGVVTSLLVSVHLLALM. Over 168–198 the chain is Cytoplasmic; it reads MSTCILPYMEATGCTQDSPHIKLKFYIDLSW. The helical transmembrane segment at 199–219 threads the bilayer; the sequence is LFSTCIGLLLFLVEIGVIFYV. Residues 220 to 230 are Extracellular-facing; sequence KFTAVGYPTAG. Residues 231 to 251 traverse the membrane as a helical segment; the sequence is YITTAMLVPVGVVFVVFSYLI. Residues 252 to 293 lie on the Cytoplasmic side of the membrane; sequence HKNRVSHSLGRFKHKVDTMKQFLDVEANLQKSTLAPSTIRDI.

The protein belongs to the Orai family. In terms of tissue distribution, expressed in gonad sheath cells, hypodermis, intestine and spermatheca. Coexpressed with stim-1.

It localises to the membrane. Its function is as follows. Ca(2+) release-activated Ca(2+)-like (CRAC-like) channel subunit which mediates Ca(2+) influx and increase in Ca(2+)-selective current by synergy with the Ca(2+) sensor, stim-1. Required for Ca(2+) and IP3-dependent contractile activity of sheath cells and the spermatheca. Affects brood size and somatic cell function. The polypeptide is Protein orai (orai-1) (Caenorhabditis elegans).